Reading from the N-terminus, the 156-residue chain is Small ribosomal subunit protein uS7 (156 aa).

It belongs to the universal ribosomal protein uS7 family. Part of the 30S ribosomal subunit. Contacts proteins S9 and S11.

Its function is as follows. One of the primary rRNA binding proteins, it binds directly to 16S rRNA where it nucleates assembly of the head domain of the 30S subunit. Is located at the subunit interface close to the decoding center, probably blocks exit of the E-site tRNA. This chain is Small ribosomal subunit protein uS7, found in Nitratiruptor sp. (strain SB155-2).